Here is a 369-residue protein sequence, read N- to C-terminus: Methylthioribose-1-phosphate isomerase (369 aa).

Methionine 1 bears the N-acetylmethionine mark. Arginine 158 bears the Omega-N-methylarginine mark. Aspartate 248 functions as the Proton donor in the catalytic mechanism. Serine 366 carries the phosphoserine modification.

The protein belongs to the eIF-2B alpha/beta/delta subunits family. MtnA subfamily.

Its subcellular location is the cytoplasm. It localises to the nucleus. The enzyme catalyses 5-(methylsulfanyl)-alpha-D-ribose 1-phosphate = 5-(methylsulfanyl)-D-ribulose 1-phosphate. It functions in the pathway amino-acid biosynthesis; L-methionine biosynthesis via salvage pathway; L-methionine from S-methyl-5-thio-alpha-D-ribose 1-phosphate: step 1/6. Functionally, catalyzes the interconversion of methylthioribose-1-phosphate (MTR-1-P) into methylthioribulose-1-phosphate (MTRu-1-P). The polypeptide is Methylthioribose-1-phosphate isomerase (Mri1) (Rattus norvegicus (Rat)).